A 381-amino-acid polypeptide reads, in one-letter code: Anhydro-N-acetylmuramic acid kinase (381 aa).

An ATP-binding site is contributed by 13–20 (GTSLDGID).

Belongs to the anhydro-N-acetylmuramic acid kinase family.

It carries out the reaction 1,6-anhydro-N-acetyl-beta-muramate + ATP + H2O = N-acetyl-D-muramate 6-phosphate + ADP + H(+). Its pathway is amino-sugar metabolism; 1,6-anhydro-N-acetylmuramate degradation. It participates in cell wall biogenesis; peptidoglycan recycling. Its function is as follows. Catalyzes the specific phosphorylation of 1,6-anhydro-N-acetylmuramic acid (anhMurNAc) with the simultaneous cleavage of the 1,6-anhydro ring, generating MurNAc-6-P. Is required for the utilization of anhMurNAc either imported from the medium or derived from its own cell wall murein, and thus plays a role in cell wall recycling. This Francisella tularensis subsp. novicida (strain U112) protein is Anhydro-N-acetylmuramic acid kinase.